A 122-amino-acid polypeptide reads, in one-letter code: Large ribosomal subunit protein uL14 (122 aa).

The protein belongs to the universal ribosomal protein uL14 family. As to quaternary structure, part of the 50S ribosomal subunit. Forms a cluster with proteins L3 and L19. In the 70S ribosome, L14 and L19 interact and together make contacts with the 16S rRNA in bridges B5 and B8.

Binds to 23S rRNA. Forms part of two intersubunit bridges in the 70S ribosome. The chain is Large ribosomal subunit protein uL14 from Bdellovibrio bacteriovorus (strain ATCC 15356 / DSM 50701 / NCIMB 9529 / HD100).